The following is a 211-amino-acid chain: Imidazole glycerol phosphate synthase subunit HisH (211 aa).

The Glutamine amidotransferase type-1 domain maps to 3 to 211 (VVAVIDYEMG…VSQVREKIAA (209 aa)). The Nucleophile role is filled by cysteine 81. Active-site residues include histidine 186 and glutamate 188.

Heterodimer of HisH and HisF.

Its subcellular location is the cytoplasm. The enzyme catalyses 5-[(5-phospho-1-deoxy-D-ribulos-1-ylimino)methylamino]-1-(5-phospho-beta-D-ribosyl)imidazole-4-carboxamide + L-glutamine = D-erythro-1-(imidazol-4-yl)glycerol 3-phosphate + 5-amino-1-(5-phospho-beta-D-ribosyl)imidazole-4-carboxamide + L-glutamate + H(+). It carries out the reaction L-glutamine + H2O = L-glutamate + NH4(+). It functions in the pathway amino-acid biosynthesis; L-histidine biosynthesis; L-histidine from 5-phospho-alpha-D-ribose 1-diphosphate: step 5/9. In terms of biological role, IGPS catalyzes the conversion of PRFAR and glutamine to IGP, AICAR and glutamate. The HisH subunit catalyzes the hydrolysis of glutamine to glutamate and ammonia as part of the synthesis of IGP and AICAR. The resulting ammonia molecule is channeled to the active site of HisF. This chain is Imidazole glycerol phosphate synthase subunit HisH, found in Nostoc sp. (strain PCC 7120 / SAG 25.82 / UTEX 2576).